The sequence spans 179 residues: Hypoxanthine phosphoribosyltransferase (179 aa).

Diphosphate-binding residues include Arg45 and Gly46. Position 101 (Glu101) interacts with GMP. Residue Glu101 participates in IMP binding. Mg(2+) contacts are provided by Glu101 and Asp102. The active-site Proton acceptor is the Asp105. GMP is bound by residues 105 to 110 (DTGYTL), Lys133, and Asp161. IMP is bound by residues 105–110 (DTGYTL) and Lys133. Arg167 contributes to the diphosphate binding site.

It belongs to the purine/pyrimidine phosphoribosyltransferase family. As to quaternary structure, homotetramer. It depends on Mg(2+) as a cofactor.

It localises to the cytoplasm. The catalysed reaction is IMP + diphosphate = hypoxanthine + 5-phospho-alpha-D-ribose 1-diphosphate. It carries out the reaction GMP + diphosphate = guanine + 5-phospho-alpha-D-ribose 1-diphosphate. It functions in the pathway purine metabolism; IMP biosynthesis via salvage pathway; IMP from hypoxanthine: step 1/1. Functionally, purine salvage pathway enzyme which catalyzes the transfer of the ribosyl-5-phosphate group from 5-phospho-alpha-D-ribose 1-diphosphate (PRPP) to the N9 position of hypoxanthine to yield IMP (inosine 5'-monophosphate). To a lesser extent, can also act on guanine leading to GMP, but shows a highly less efficient activity with xanthine. The sequence is that of Hypoxanthine phosphoribosyltransferase (hpt) from Haemophilus influenzae (strain ATCC 51907 / DSM 11121 / KW20 / Rd).